The chain runs to 188 residues: Large ribosomal subunit protein eL18A (188 aa).

The segment at 153 to 188 (GKAPSTPHSRTKPYVLSKGRKFERARGRRASRGYKN) is disordered. Basic residues predominate over residues 178-188 (RGRRASRGYKN).

Belongs to the eukaryotic ribosomal protein eL18 family. As to quaternary structure, component of the large ribosomal subunit.

The protein localises to the cytoplasm. Component of the large ribosomal subunit. The ribosome is a large ribonucleoprotein complex responsible for the synthesis of proteins in the cell. The protein is Large ribosomal subunit protein eL18A (rpl18-a) of Xenopus laevis (African clawed frog).